Consider the following 472-residue polypeptide: Zinc finger and BTB domain-containing protein 18.2 (472 aa).

The BTB domain maps to 24–91 (CDCTVLVGEA…MYEGKLEFSN (68 aa)). Over residues 127–149 (KIIDDGEKDDKPVDSEEHHEHSF) the composition is skewed to basic and acidic residues. Disordered stretches follow at residues 127–155 (KIIDDGEKDDKPVDSEEHHEHSFDASQQK), 197–236 (AGKTKANDSSPSSPLSQRSANHTHPPSDRDGALDLSFKPM), and 269–334 (DLLS…LSTS). Over residues 205–215 (SSPSSPLSQRS) the composition is skewed to low complexity. The segment covering 279–288 (AKSPKSQQVG) has biased composition (polar residues). A compositionally biased stretch (basic and acidic residues) spans 309-319 (HTREDDLYQDR). 4 consecutive C2H2-type zinc fingers follow at residues 344–366 (CICPLCSKVFPSPHILQLHLSSH), 384–406 (PTCTICGKTFSCMYTLKRHERTH), 412–434 (FTCGQCGKSFQYSHNLSRHAVVH), and 440–463 (HACKWCERRFTQSGDLYRHIRKFH).

It belongs to the krueppel C2H2-type zinc-finger protein family. ZBTB18 subfamily.

The protein resides in the nucleus. Transcriptional repressor that plays a role in various developmental processes. Specifically binds the consensus DNA sequence 5'-[AC]ACATCTG[GT][AC]-3' which contains the E box core, and acts by recruiting chromatin remodeling multiprotein complexes. The protein is Zinc finger and BTB domain-containing protein 18.2 (zbtb18.2) of Xenopus laevis (African clawed frog).